We begin with the raw amino-acid sequence, 561 residues long: MQIINWASLLLVTWETVVAAELPIVDLGYQRHQAIGFNSTGRYYQFSNVRYAEPPLGPLRFSLPVSPRNRSHEVVNGKGLGNICPQSQACWFNVQGDFVSAVTAGSTFNFTAAYDQVYQQDECTKPRPVADQNPLESEDCLFLDVYVPEKVISKRRDGNGKSNPGAPVLVYFQDGAYVSGSKSDQNPSGLIATSREDGSTGIIYVGVNYRLGVFGWLSGQKFQSEGGLPNAGLYDERLALEWVQRHITKFGGDPSRVTVMGVSAGGGSITMQLTAYGRAIRPPFAQIIAQSPAWEPGTKTPAIEDDLLDSFLTLLNVSSLEEARRLPSQALLDANYELVASRPYGSGVFGPAIDGSFVPDSPKRLLLERKVDPSVRILTSYTANEGFMLAPANVTDDATFNRYVDVLLRGANASVRAHTSRVLYPPIFNGSWPYHSQHERANLLWSEVSTTCNTRYLHQAVATPGYAIEYAVKPAMHLSDTSSVFYNGQGSSSSLNATIAQLMQRQIVQFVKTGNPNVKGDPHVPLYHGQAHVLSLGDNGVRVEPALTNTDRCTYWQQVEF.

A signal peptide spans 1 to 19 (MQIINWASLLLVTWETVVA). N-linked (GlcNAc...) asparagine glycans are attached at residues Asn-38, Asn-69, and Asn-109. Ser-263 functions as the Acyl-ester intermediate in the catalytic mechanism. Residue Ser-263 coordinates substrate. The N-linked (GlcNAc...) asparagine glycan is linked to Asn-316. Glu-385 functions as the Charge relay system in the catalytic mechanism. N-linked (GlcNAc...) asparagine glycosylation is found at Asn-393, Asn-412, Asn-429, and Asn-496.

Belongs to the type-B carboxylesterase/lipase family.

It localises to the cytoplasm. It is found in the cytosol. It carries out the reaction a carboxylic ester + H2O = an alcohol + a carboxylate + H(+). It participates in mycotoxin biosynthesis; patulin biosynthesis. Functionally, carboxylesterase; part of the gene cluster that mediates the biosynthesis of patulin, an acetate-derived tetraketide mycotoxin produced by several fungal species that shows antimicrobial properties against several bacteria. The function of patB in patulin synthesis has still to be characterized. The pathway begins with the synthesis of 6-methylsalicylic acid by the polyketide synthase (PKS) patK via condensation of acetate and malonate units. The 6-methylsalicylic acid decarboxylase patG then catalyzes the decarboxylation of 6-methylsalicylic acid to yield m-cresol (also known as 3-methylphenol). These first reactions occur in the cytosol. The intermediate m-cresol is then transported into the endoplasmic reticulum where the cytochrome P450 monooxygenase patH converts it to m-hydroxybenzyl alcohol, which is further converted to gentisyl alcohol by the cytochrome P450 monooxygenase patI. The oxidoreductases patJ and patO further convert gentisyl alcohol to isoepoxydon in the vacuole. PatN catalyzes then the transformation of isoepoxydon into phyllostine. The cluster protein patF is responsible for the conversion from phyllostine to neopatulin whereas the alcohol dehydrogenase patD converts neopatulin to E-ascladiol. The steps between isoepoxydon and E-ascladiol occur in the cytosol, and E-ascladiol is probably secreted to the extracellular space by one of the cluster-specific transporters patC or patM. Finally, the secreted patulin synthase patE catalyzes the conversion of E-ascladiol to patulin. The chain is Carboxylesterase patB from Penicillium expansum (Blue mold rot fungus).